The chain runs to 320 residues: Thioredoxin reductase (320 aa).

36–43 (TGMEQGGQ) is an FAD binding site. Cys136 and Cys139 form a disulfide bridge. An FAD-binding site is contributed by 287–296 (DVTDHVYRQA).

The protein belongs to the class-II pyridine nucleotide-disulfide oxidoreductase family. Homodimer. The cofactor is FAD.

The protein resides in the cytoplasm. The catalysed reaction is [thioredoxin]-dithiol + NADP(+) = [thioredoxin]-disulfide + NADPH + H(+). The polypeptide is Thioredoxin reductase (trxB) (Coxiella burnetii (strain RSA 493 / Nine Mile phase I)).